The primary structure comprises 560 residues: MKVWMAILISILCWQSSAWAVCPAWSPARAQEEISRLQQQIKQWDDDYWKEGESEIEDGVYDQLSARLTQWQRCFGNEPRDAMMPPLAGTVMHPVAHTGVRKLADKNALRLWMREHNDLWVQPKVDGVAVTLVYRDGKLNKAISRGNGLKGEDWTQKVSLISAVPQTVSGPLANSTLQGEIFLKRKGHIQQQMGGINARAKVAGLMMRQGNSDTLNSLAVFVWAWPDGPHLMTDRLKDLATAGFTLTQTYTRAVKNADEVAHVRNEWWKAKLPFVTDGVVVRAAKEPESRHWLPGQAEWLVAWKYQPVAQVAEVKAIQFAVGKSGKISVVASLAPVMLDDKKVQRVNIGSVRRWQEWDIAPGDQILVSLAGQGIPRIDDVVWRGAERTKPTPPENRFNSLTCYFASDVCQEQFISRLVWLGSKQVLGLDGIGEAGWRALHQTHRFEHIFSWLLLTPEQLQNTPGIAKSKSAQLWHQFNLARQQPFTRWVMAMGIPLTRAALNASDERSWSQLLFSTEQFWQQLPGTGSGRARQVIEWKENAQIKKLGSWLAAQQITGFEP.

Lysine 124 acts as the N6-AMP-lysine intermediate in catalysis.

It belongs to the NAD-dependent DNA ligase family. LigB subfamily.

It catalyses the reaction NAD(+) + (deoxyribonucleotide)n-3'-hydroxyl + 5'-phospho-(deoxyribonucleotide)m = (deoxyribonucleotide)n+m + AMP + beta-nicotinamide D-nucleotide.. Its function is as follows. Catalyzes the formation of phosphodiester linkages between 5'-phosphoryl and 3'-hydroxyl groups in double-stranded DNA using NAD as a coenzyme and as the energy source for the reaction. This is DNA ligase B from Escherichia coli O6:K15:H31 (strain 536 / UPEC).